The following is a 579-amino-acid chain: Copine-E (579 aa).

C2 domains follow at residues 45 to 175 (IDPS…KVIG) and 183 to 304 (QTGT…EFTL). The Ca(2+) site is built by Asp-80, Asp-86, Asp-145, Asp-147, and Asp-153. Positions 345–552 (NLMIAIDCTA…KKYENDPEQL (208 aa)) constitute a VWFA domain.

It belongs to the copine family. Ca(2+) is required as a cofactor.

The protein is Copine-E (cpnE) of Dictyostelium discoideum (Social amoeba).